The primary structure comprises 156 residues: MPRKGPAPKRPLVSDPVYGSPLVTQLINKVLVDGKKSTAERIVYGALEGARAKSGGDPVAALKKAMDNVKPSLEVRSRRVGGATYQVPVEVKPGRSTALALRWLVGYSKARREKTMTERLQNEILDASNGLGAAVKRREDTHKMAESNKAFAHYRW.

Belongs to the universal ribosomal protein uS7 family. As to quaternary structure, part of the 30S ribosomal subunit. Contacts proteins S9 and S11.

In terms of biological role, one of the primary rRNA binding proteins, it binds directly to 16S rRNA where it nucleates assembly of the head domain of the 30S subunit. Is located at the subunit interface close to the decoding center, probably blocks exit of the E-site tRNA. This is Small ribosomal subunit protein uS7 from Paenarthrobacter aurescens (strain TC1).